Here is a 235-residue protein sequence, read N- to C-terminus: STARD3 N-terminal-like protein (235 aa).

Met1 carries the N-acetylmethionine modification. The tract at residues 1 to 20 is disordered; sequence MNHLPEHMENTLTGSQSSHA. The Cytoplasmic portion of the chain corresponds to 1-53; sequence MNHLPEHMENTLTGSQSSHASLRDIHSINPAQLMARIESYEGREKKGISDVRR. The segment covering 10 to 20 has biased composition (polar residues); that stretch reads NTLTGSQSSHA. Phosphoserine is present on residues Ser15, Ser21, and Ser27. The MENTAL domain maps to 48–218; it reads ISDVRRTFCL…YSPPESEAGS (171 aa). Residues 54 to 74 traverse the membrane as a helical segment; that stretch reads TFCLFVTFDLLFVTLLWIIEL. Residues 75–97 lie on the Extracellular side of the membrane; it reads NVNGGIENTLKKEVIHYDYYSSY. Residues 98–118 form a helical membrane-spanning segment; sequence FDIFLLAVFRFKVLILGYAVC. Over 119-122 the chain is Cytoplasmic; the sequence is RLRH. A helical membrane pass occupies residues 123 to 143; it reads WWAIALTTAVTSAFLLAKVIL. Residues 144-150 lie on the Extracellular side of the membrane; the sequence is SKLFSQG. A helical membrane pass occupies residues 151–171; it reads AFGYVLPIISFILAWIETWFL. Residues 172-235 lie on the Cytoplasmic side of the membrane; it reads DFKVLPQEAE…QESEKPLLEL (64 aa). A Phosphoserine modification is found at Ser193. Positions 202 to 235 are disordered; that stretch reads GLSDGQFYSPPESEAGSEEEAEEKQESEKPLLEL. Positions 208–213 match the FFAT motif; the sequence is FYSPPE. Positions 225-235 are enriched in basic and acidic residues; sequence KQESEKPLLEL.

Belongs to the STARD3 family. In terms of assembly, homodimer. Interacts (via the MENTAL domain) with STARD3NL. Interacts (via FFAT motif) with VAPA. Interacts (via FFAT motif) with VAPB. Interacts (via FFAT motif) with MOSPD2 (via MSP domain).

The protein resides in the late endosome membrane. Tethering protein that creates contact site between the endoplasmic reticulum and late endosomes: localizes to late endosome membranes and contacts the endoplasmic reticulum via interaction with VAPA and VAPB. This chain is STARD3 N-terminal-like protein, found in Mus musculus (Mouse).